Reading from the N-terminus, the 364-residue chain is Aminomethyltransferase (364 aa).

The protein belongs to the GcvT family. As to quaternary structure, the glycine cleavage system is composed of four proteins: P, T, L and H.

It catalyses the reaction N(6)-[(R)-S(8)-aminomethyldihydrolipoyl]-L-lysyl-[protein] + (6S)-5,6,7,8-tetrahydrofolate = N(6)-[(R)-dihydrolipoyl]-L-lysyl-[protein] + (6R)-5,10-methylene-5,6,7,8-tetrahydrofolate + NH4(+). The glycine cleavage system catalyzes the degradation of glycine. This Staphylococcus carnosus (strain TM300) protein is Aminomethyltransferase.